A 127-amino-acid polypeptide reads, in one-letter code: Apolipoprotein C-IV (127 aa).

Positions 1-27 (MSLLRNRLQDLPALCLCVLVLACIGAC) are cleaved as a signal peptide. N-linked (GlcNAc...) asparagine glycosylation occurs at asparagine 63.

It belongs to the apolipoprotein C4 family.

Its subcellular location is the secreted. In terms of biological role, may participate in lipoprotein metabolism. This Colobus guereza (Mantled guereza) protein is Apolipoprotein C-IV (APOC4).